A 403-amino-acid chain; its full sequence is Alpha-1-antiproteinase F (403 aa).

The signal sequence occupies residues 1 to 22 (SAIPRGLLLLAGLCCLVFGIMA). N-linked (GlcNAc...) asparagine glycosylation is found at Asn55, Asn92, Asn155, Asn222, and Asn256. Residues 358–377 (GATELEITPHSVPQDLFFNK) form an RCL region.

This sequence belongs to the serpin family.

The protein resides in the secreted. Inhibits elastase, chymotrypsin, cathepsin G, plasmin, and trypsin. The protein is Alpha-1-antiproteinase F of Cavia porcellus (Guinea pig).